Reading from the N-terminus, the 302-residue chain is uncharacterized protein (302 aa).

9 consecutive transmembrane segments (helical) span residues isoleucine 3–phenylalanine 23, phenylalanine 39–alanine 59, serine 77–valine 97, leucine 106–isoleucine 126, glycine 128–alanine 148, phenylalanine 163–valine 183, valine 199–alanine 219, glycine 227–valine 247, and leucine 254–phenylalanine 274.

Belongs to the Ca(2+):cation antiporter (CaCA) (TC 2.A.19) family.

It is found in the cell membrane. This is an uncharacterized protein from Methanocaldococcus jannaschii (strain ATCC 43067 / DSM 2661 / JAL-1 / JCM 10045 / NBRC 100440) (Methanococcus jannaschii).